A 295-amino-acid chain; its full sequence is Transcription factor bHLH19 (295 aa).

In terms of domain architecture, bHLH spans 115 to 164 (VLAKEHVLAERKRREKLSEKFIALSALLPGLKKADKVTILDDAISRMKQL).

In terms of assembly, homodimer. Expressed in roots and leaves.

The protein resides in the nucleus. The protein is Transcription factor bHLH19 (BHLH19) of Arabidopsis thaliana (Mouse-ear cress).